The primary structure comprises 100 residues: Urease subunit gamma (100 aa).

This sequence belongs to the urease gamma subunit family. In terms of assembly, heterotrimer of UreA (gamma), UreB (beta) and UreC (alpha) subunits. Three heterotrimers associate to form the active enzyme.

The protein localises to the cytoplasm. It carries out the reaction urea + 2 H2O + H(+) = hydrogencarbonate + 2 NH4(+). The protein operates within nitrogen metabolism; urea degradation; CO(2) and NH(3) from urea (urease route): step 1/1. The sequence is that of Urease subunit gamma from Synechococcus sp. (strain CC9605).